The sequence spans 436 residues: GTPase Der (436 aa).

EngA-type G domains are found at residues P3–S168 and I177–S352. GTP-binding positions include G9 to S16, D56 to Y60, N120 to E123, G183 to S190, D230 to L234, and N295 to D298. One can recognise a KH-like domain in the interval Q353–K436.

This sequence belongs to the TRAFAC class TrmE-Era-EngA-EngB-Septin-like GTPase superfamily. EngA (Der) GTPase family. In terms of assembly, associates with the 50S ribosomal subunit.

In terms of biological role, GTPase that plays an essential role in the late steps of ribosome biogenesis. The sequence is that of GTPase Der from Prosthecochloris aestuarii (strain DSM 271 / SK 413).